The following is a 238-amino-acid chain: Ribitol-5-phosphate cytidylyltransferase (238 aa).

CTP contacts are provided by residues 7–10 (LAGG) and 81–87 (GDDRNHT).

This sequence belongs to the IspD/TarI cytidylyltransferase family. TarI subfamily.

It catalyses the reaction D-ribitol 5-phosphate + CTP + H(+) = CDP-L-ribitol + diphosphate. It functions in the pathway cell wall biogenesis; poly(ribitol phosphate) teichoic acid biosynthesis. In terms of biological role, catalyzes the transfer of the cytidylyl group of CTP to D-ribitol 5-phosphate. This is Ribitol-5-phosphate cytidylyltransferase from Staphylococcus epidermidis (strain ATCC 35984 / DSM 28319 / BCRC 17069 / CCUG 31568 / BM 3577 / RP62A).